A 314-amino-acid chain; its full sequence is tRNA dimethylallyltransferase (314 aa).

Glycine 10–threonine 17 is an ATP binding site. Threonine 12–threonine 17 contributes to the substrate binding site. Positions aspartate 35–glutamine 38 are interaction with substrate tRNA.

This sequence belongs to the IPP transferase family. As to quaternary structure, monomer. Mg(2+) is required as a cofactor.

The catalysed reaction is adenosine(37) in tRNA + dimethylallyl diphosphate = N(6)-dimethylallyladenosine(37) in tRNA + diphosphate. Functionally, catalyzes the transfer of a dimethylallyl group onto the adenine at position 37 in tRNAs that read codons beginning with uridine, leading to the formation of N6-(dimethylallyl)adenosine (i(6)A). The sequence is that of tRNA dimethylallyltransferase from Finegoldia magna (strain ATCC 29328 / DSM 20472 / WAL 2508) (Peptostreptococcus magnus).